A 384-amino-acid polypeptide reads, in one-letter code: Zinc finger protein GLIS2 homolog (384 aa).

The C2H2-type 1 zinc finger occupies 128 to 153 (FVCNWTDCDRVFDTLDALAQHVTQRH). Residues 163 to 190 (YYCRWRGCQRSERGFNARYKMLVHTRTH) form a C2H2-type 2; degenerate zinc finger. 3 C2H2-type zinc fingers span residues 196-218 (HRCH…IRSH), 224-248 (YKCS…TRTH), and 254-280 (YMCK…TFKH). Positions 321-343 (SSSSARYYDDSNNEPSDYSLKPK) are disordered.

It belongs to the GLI C2H2-type zinc-finger protein family.

It localises to the nucleus. In terms of biological role, transcription factor which represses a set of lipase genes involved in fat catabolism. This is Zinc finger protein GLIS2 homolog (sug) from Drosophila melanogaster (Fruit fly).